Here is a 240-residue protein sequence, read N- to C-terminus: Peptidyl-tRNA hydrolase (240 aa).

Tyrosine 14 lines the tRNA pocket. Histidine 19 (proton acceptor) is an active-site residue. Positions 64, 66, and 112 each coordinate tRNA. The segment covering 190-204 has biased composition (basic and acidic residues); it reads KADEEKPRKDSEKKP. A disordered region spans residues 190-240; that stretch reads KADEEKPRKDSEKKPAGQSHIRQARNNNQPKLPATGPMADMLKKMFGNKGE. The segment covering 209-219 has biased composition (polar residues); that stretch reads HIRQARNNNQP.

It belongs to the PTH family. As to quaternary structure, monomer.

It localises to the cytoplasm. It catalyses the reaction an N-acyl-L-alpha-aminoacyl-tRNA + H2O = an N-acyl-L-amino acid + a tRNA + H(+). Functionally, hydrolyzes ribosome-free peptidyl-tRNAs (with 1 or more amino acids incorporated), which drop off the ribosome during protein synthesis, or as a result of ribosome stalling. Catalyzes the release of premature peptidyl moieties from peptidyl-tRNA molecules trapped in stalled 50S ribosomal subunits, and thus maintains levels of free tRNAs and 50S ribosomes. In Rhizobium etli (strain ATCC 51251 / DSM 11541 / JCM 21823 / NBRC 15573 / CFN 42), this protein is Peptidyl-tRNA hydrolase.